Here is a 144-residue protein sequence, read N- to C-terminus: Large ribosomal subunit protein uL16 (144 aa).

Positions 1–16 (MLIPKRVKYRKQHRGR) are enriched in basic residues. The disordered stretch occupies residues 1–23 (MLIPKRVKYRKQHRGRPGGGMAK).

Belongs to the universal ribosomal protein uL16 family. As to quaternary structure, part of the 50S ribosomal subunit.

Binds 23S rRNA and is also seen to make contacts with the A and possibly P site tRNAs. In Pelotomaculum thermopropionicum (strain DSM 13744 / JCM 10971 / SI), this protein is Large ribosomal subunit protein uL16.